Consider the following 768-residue polypeptide: Glucoamylase S2 (768 aa).

Residues 1–21 (MQRPFLLAYLVLSLLFNSALG) form the signal peptide. Disordered stretches follow at residues 29-83 (RGSS…ETTI) and 125-149 (TTTVPCSTSPSETASESTTTSPTTP). The segment covering 30-48 (GSSSSNITSSGPSSTPFSS) has biased composition (low complexity). The N-linked (GlcNAc...) asparagine glycan is linked to Asn35. The span at 49 to 66 (ATESFSTGTTVTPSSSKY) shows a compositional bias: polar residues. 2 stretches are compositionally biased toward low complexity: residues 71–83 (TETSVSSTTETTI) and 131–149 (STSPSETASESTTTSPTTP). N-linked (GlcNAc...) asparagine glycans are attached at residues Asn309, Asn323, Asn415, Asn424, and Asn435. The segment at 349-692 (VSIERIFENI…ASTTLYQLIY (344 aa)) is h subunit. Trp456 provides a ligand contact to substrate. An N-linked (GlcNAc...) asparagine glycan is attached at Asn514. Residue Asp519 is the Proton acceptor of the active site. The active-site Proton donor is Glu522. N-linked (GlcNAc...) asparagine glycosylation is found at Asn547, Asn646, Asn651, Asn721, and Asn742. The y subunit stretch occupies residues 693-768 (RHISEQHDLV…LKATWEQTGN (76 aa)).

It belongs to the glycosyl hydrolase 15 family.

It catalyses the reaction Hydrolysis of terminal (1-&gt;4)-linked alpha-D-glucose residues successively from non-reducing ends of the chains with release of beta-D-glucose.. This Saccharomyces cerevisiae (Baker's yeast) protein is Glucoamylase S2 (STA2).